A 363-amino-acid polypeptide reads, in one-letter code: Carbamoyl phosphate synthase small chain (363 aa).

Positions 1–172 (MTKRILMLED…AFASPGDGKR (172 aa)) are CPSase. Residues Ser-46, Gly-220, and Gly-222 each coordinate L-glutamine. The 188-residue stretch at 172–359 (RVVLVDYGVK…MEMMNGKEEG (188 aa)) folds into the Glutamine amidotransferase type-1 domain. Cys-247 functions as the Nucleophile in the catalytic mechanism. L-glutamine contacts are provided by Leu-248, Gln-251, Asn-289, Gly-291, and Tyr-292. Active-site residues include His-332 and Glu-334.

The protein belongs to the CarA family. As to quaternary structure, composed of two chains; the small (or glutamine) chain promotes the hydrolysis of glutamine to ammonia, which is used by the large (or ammonia) chain to synthesize carbamoyl phosphate. Tetramer of heterodimers (alpha,beta)4.

The enzyme catalyses hydrogencarbonate + L-glutamine + 2 ATP + H2O = carbamoyl phosphate + L-glutamate + 2 ADP + phosphate + 2 H(+). It carries out the reaction L-glutamine + H2O = L-glutamate + NH4(+). The protein operates within amino-acid biosynthesis; L-arginine biosynthesis; carbamoyl phosphate from bicarbonate: step 1/1. It participates in pyrimidine metabolism; UMP biosynthesis via de novo pathway; (S)-dihydroorotate from bicarbonate: step 1/3. Functionally, small subunit of the glutamine-dependent carbamoyl phosphate synthetase (CPSase). CPSase catalyzes the formation of carbamoyl phosphate from the ammonia moiety of glutamine, carbonate, and phosphate donated by ATP, constituting the first step of 2 biosynthetic pathways, one leading to arginine and/or urea and the other to pyrimidine nucleotides. The small subunit (glutamine amidotransferase) binds and cleaves glutamine to supply the large subunit with the substrate ammonia. The polypeptide is Carbamoyl phosphate synthase small chain (Listeria monocytogenes serotype 4b (strain F2365)).